The primary structure comprises 260 residues: 3'-5' ssDNA/RNA exonuclease TatD (260 aa).

A divalent metal cation contacts are provided by E91, H127, and H152.

The protein belongs to the metallo-dependent hydrolases superfamily. TatD-type hydrolase family. TatD subfamily. As to quaternary structure, monomer. Requires Mg(2+) as cofactor.

It localises to the cytoplasm. Its function is as follows. 3'-5' exonuclease that prefers single-stranded DNA and RNA. May play a role in the H(2)O(2)-induced DNA damage repair. This Escherichia fergusonii (strain ATCC 35469 / DSM 13698 / CCUG 18766 / IAM 14443 / JCM 21226 / LMG 7866 / NBRC 102419 / NCTC 12128 / CDC 0568-73) protein is 3'-5' ssDNA/RNA exonuclease TatD.